Consider the following 321-residue polypeptide: Probable cell division protein WhiA (321 aa).

The segment at residues Asn-276–Gln-309 is a DNA-binding region (H-T-H motif).

Belongs to the WhiA family.

Functionally, involved in cell division and chromosome segregation. The protein is Probable cell division protein WhiA of Natranaerobius thermophilus (strain ATCC BAA-1301 / DSM 18059 / JW/NM-WN-LF).